Reading from the N-terminus, the 274-residue chain is Diaminopimelate epimerase (274 aa).

Substrate contacts are provided by N11 and N76. The active-site Proton donor is C85. Substrate is bound by residues 86-87, N157, N189, and 207-208; these read GN and ER. The active-site Proton acceptor is C216. 217 to 218 contributes to the substrate binding site; it reads GT.

It belongs to the diaminopimelate epimerase family. In terms of assembly, homodimer.

Its subcellular location is the cytoplasm. It carries out the reaction (2S,6S)-2,6-diaminopimelate = meso-2,6-diaminopimelate. It functions in the pathway amino-acid biosynthesis; L-lysine biosynthesis via DAP pathway; DL-2,6-diaminopimelate from LL-2,6-diaminopimelate: step 1/1. Catalyzes the stereoinversion of LL-2,6-diaminopimelate (L,L-DAP) to meso-diaminopimelate (meso-DAP), a precursor of L-lysine and an essential component of the bacterial peptidoglycan. The polypeptide is Diaminopimelate epimerase (Thermobifida fusca (strain YX)).